Reading from the N-terminus, the 304-residue chain is Lipoyl synthase (304 aa).

[4Fe-4S] cluster-binding residues include cysteine 41, cysteine 46, cysteine 52, cysteine 68, cysteine 72, cysteine 75, and serine 281. A Radical SAM core domain is found at 54 to 270; it reads GARRTATFMI…RKIAMEKGFK (217 aa). The segment at 282–304 is disordered; it reads YHADEQVNEAAKEKQRQGEEQLN.

The protein belongs to the radical SAM superfamily. Lipoyl synthase family. [4Fe-4S] cluster serves as cofactor.

It localises to the cytoplasm. The catalysed reaction is [[Fe-S] cluster scaffold protein carrying a second [4Fe-4S](2+) cluster] + N(6)-octanoyl-L-lysyl-[protein] + 2 oxidized [2Fe-2S]-[ferredoxin] + 2 S-adenosyl-L-methionine + 4 H(+) = [[Fe-S] cluster scaffold protein] + N(6)-[(R)-dihydrolipoyl]-L-lysyl-[protein] + 4 Fe(3+) + 2 hydrogen sulfide + 2 5'-deoxyadenosine + 2 L-methionine + 2 reduced [2Fe-2S]-[ferredoxin]. It participates in protein modification; protein lipoylation via endogenous pathway; protein N(6)-(lipoyl)lysine from octanoyl-[acyl-carrier-protein]. In terms of biological role, catalyzes the radical-mediated insertion of two sulfur atoms into the C-6 and C-8 positions of the octanoyl moiety bound to the lipoyl domains of lipoate-dependent enzymes, thereby converting the octanoylated domains into lipoylated derivatives. The polypeptide is Lipoyl synthase (Staphylococcus epidermidis (strain ATCC 35984 / DSM 28319 / BCRC 17069 / CCUG 31568 / BM 3577 / RP62A)).